The following is a 428-amino-acid chain: 3-phosphoshikimate 1-carboxyvinyltransferase (428 aa).

3-phosphoshikimate is bound by residues K21, S22, and R26. Position 21 (K21) interacts with phosphoenolpyruvate. The phosphoenolpyruvate site is built by G93 and R121. The 3-phosphoshikimate site is built by S166, Q168, D314, and K341. Q168 serves as a coordination point for phosphoenolpyruvate. D314 acts as the Proton acceptor in catalysis. The phosphoenolpyruvate site is built by R345 and R388.

It belongs to the EPSP synthase family. In terms of assembly, monomer.

The protein localises to the cytoplasm. The enzyme catalyses 3-phosphoshikimate + phosphoenolpyruvate = 5-O-(1-carboxyvinyl)-3-phosphoshikimate + phosphate. The protein operates within metabolic intermediate biosynthesis; chorismate biosynthesis; chorismate from D-erythrose 4-phosphate and phosphoenolpyruvate: step 6/7. In terms of biological role, catalyzes the transfer of the enolpyruvyl moiety of phosphoenolpyruvate (PEP) to the 5-hydroxyl of shikimate-3-phosphate (S3P) to produce enolpyruvyl shikimate-3-phosphate and inorganic phosphate. This Syntrophomonas wolfei subsp. wolfei (strain DSM 2245B / Goettingen) protein is 3-phosphoshikimate 1-carboxyvinyltransferase.